Here is a 1437-residue protein sequence, read N- to C-terminus: DNA polymerase III PolC-type (1437 aa).

In terms of domain architecture, Exonuclease spans 420–576 (YVIFDVETTG…YDSETTGHLC (157 aa)).

This sequence belongs to the DNA polymerase type-C family. PolC subfamily.

Its subcellular location is the cytoplasm. It carries out the reaction DNA(n) + a 2'-deoxyribonucleoside 5'-triphosphate = DNA(n+1) + diphosphate. In terms of biological role, required for replicative DNA synthesis. This DNA polymerase also exhibits 3' to 5' exonuclease activity. The protein is DNA polymerase III PolC-type of Pediococcus pentosaceus (strain ATCC 25745 / CCUG 21536 / LMG 10740 / 183-1w).